Reading from the N-terminus, the 144-residue chain is Snake venom vascular endothelial growth factor toxin cratrin (144 aa).

An N-terminal signal peptide occupies residues 1–24 (MAVYLLAVAILFCIQGWPSGTVQG). Position 25 is a pyrrolidone carboxylic acid (Q25). Cystine bridges form between C38/C80, C69/C115, and C73/C117. The interval 119–144 (PRSTVNNGKRKKNPKEGEPRAKFPLV) is disordered. Residues 132–144 (PKEGEPRAKFPLV) are compositionally biased toward basic and acidic residues.

It belongs to the PDGF/VEGF growth factor family. Snake venom VEGF subfamily. Homodimer; disulfide-linked. Interacts with VEGF receptor-1 (FLT1) with a high affinity, whereas it binds to VEGF receptor-2 (KDR) with a low affinity. Does not bind VEGF receptor-3 (FLT4). In terms of tissue distribution, expressed by the venom gland.

Its subcellular location is the secreted. Snake venom VEGFs that may contribute to venom dispersion and prey subjugation by inducing vascular permeability and hypotension. This protein induces an increase in capillary permeability after intradermal injection, as well as a drastic hypotensive effect after intravenous injection. The hypotension is mediated by nitric oxide (NO), which is produced by VEGF-activated endothelium NO synthase. Also induces angiogenesis in vitro. Like other crotalid VEGFs, this protein interacts with VEGF receptor-1 (FLT1) with a high affinity, whereas it binds to VEGF receptor-2 (KDR) with a low affinity. The chain is Snake venom vascular endothelial growth factor toxin cratrin from Crotalus atrox (Western diamondback rattlesnake).